A 104-amino-acid polypeptide reads, in one-letter code: Vacuolar ATPase assembly integral membrane protein VMA21 (104 aa).

At 1–21 (MSNRVSTGKMAMAPQESVQPA) the chain is on the cytoplasmic side. A helical membrane pass occupies residues 22 to 42 (VLYKLVLFALLMAVVPIGTYF). Over 43–65 (STLNYLWDGASRCGFPSGLCSTT) the chain is Lumenal. The chain crosses the membrane as a helical span at residues 66–86 (FAAISAIAAANLILVGYVVVA). At 87–104 (FREDAASRTGPLPEKKTS) the chain is on the cytoplasmic side. Residues 101-104 (KKTS) carry the Prevents secretion from ER motif.

The protein belongs to the VMA21 family.

Its subcellular location is the endoplasmic reticulum membrane. The protein localises to the endoplasmic reticulum-Golgi intermediate compartment membrane. The protein resides in the cytoplasmic vesicle. It is found in the COPII-coated vesicle membrane. Functionally, required for the assembly of the V0 complex of the vacuolar ATPase (V-ATPase) in the endoplasmic reticulum. This Cryptococcus neoformans var. neoformans serotype D (strain B-3501A) (Filobasidiella neoformans) protein is Vacuolar ATPase assembly integral membrane protein VMA21.